The chain runs to 82 residues: Cyclin-dependent protein kinase inhibitor SMR5 (82 aa).

A disordered region spans residues 1–26; it reads MEEKNYDDGDTVTVDDDYQMGCTTPT. Positions 8–18 are enriched in acidic residues; that stretch reads DGDTVTVDDDY.

In terms of assembly, interacts with CDKA-1 and D-type cyclins. Expressed in columella cells in the roots and in root meristems after induction.

Functionally, probable cyclin-dependent protein kinase (CDK) inhibitor that functions as a repressor of mitosis in the endoreduplication cell cycle. Acts as a potent cell cycle inhibitor, regulating a hydroxyurea-dependent checkpoint in leaves. Essential to activate a high-light-dependent cell cycle checkpoint. This chain is Cyclin-dependent protein kinase inhibitor SMR5, found in Arabidopsis thaliana (Mouse-ear cress).